The primary structure comprises 177 residues: Large ribosomal subunit protein uL6 (177 aa).

This sequence belongs to the universal ribosomal protein uL6 family. As to quaternary structure, part of the 50S ribosomal subunit.

This protein binds to the 23S rRNA, and is important in its secondary structure. It is located near the subunit interface in the base of the L7/L12 stalk, and near the tRNA binding site of the peptidyltransferase center. This chain is Large ribosomal subunit protein uL6, found in Methylibium petroleiphilum (strain ATCC BAA-1232 / LMG 22953 / PM1).